We begin with the raw amino-acid sequence, 257 residues long: Thioredoxin-dependent peroxide reductase, mitochondrial (257 aa).

The transit peptide at M1–H62 directs the protein to the mitochondrion. Residues P64 to F222 enclose the Thioredoxin domain. Residue K84 is modified to N6-succinyllysine. N6-acetyllysine; alternate is present on K92. An N6-succinyllysine; alternate modification is found at K92. C109 (cysteine sulfenic acid (-SOH) intermediate) is an active-site residue. T147 carries the post-translational modification Phosphothreonine.

This sequence belongs to the peroxiredoxin family. AhpC/Prx1 subfamily. Homodimer; disulfide-linked, upon oxidation. 6 homodimers assemble to form a ring-like dodecamer. Interacts with NEK6. Interacts with LRRK2. Interacts with MAP3K13. Interacts with RPS6KC1 (via PX domain). Post-translationally, phosphorylated by LRRK2; phosphorylation reduces perodixase activity. In terms of processing, the enzyme can be inactivated by further oxidation of the cysteine sulfenic acid (C(P)-SOH) to sulphinic acid (C(P)-SO2H) and sulphonic acid (C(P)-SO3H) instead of its condensation to a disulfide bond. S-palmitoylated. As to expression, housekeeping-type gene preferentially expressed in murine erythroleukemia (MEL) cells.

Its subcellular location is the mitochondrion. It localises to the cytoplasm. The protein resides in the early endosome. The catalysed reaction is a hydroperoxide + [thioredoxin]-dithiol = an alcohol + [thioredoxin]-disulfide + H2O. Its function is as follows. Thiol-specific peroxidase that catalyzes the reduction of hydrogen peroxide and organic hydroperoxides to water and alcohols, respectively. Plays a role in cell protection against oxidative stress by detoxifying peroxides. Acts synergistically with MAP3K13 to regulate the activation of NF-kappa-B in the cytosol. Required for the maintenance of physical strength. The chain is Thioredoxin-dependent peroxide reductase, mitochondrial (Prdx3) from Mus musculus (Mouse).